The chain runs to 487 residues: Inosine-5'-monophosphate dehydrogenase (487 aa).

2 consecutive CBS domains span residues 93–152 (VVTE…VTAV) and 153–214 (MTPK…CKDE). NAD(+) contacts are provided by residues D248, 248 to 250 (DSS), and 298 to 300 (GIG). The K(+) site is built by G300 and G302. S303 contacts IMP. C305 contacts K(+). C305 serves as the catalytic Thioimidate intermediate. IMP is bound by residues 338–340 (DGG), 361–362 (GS), and 385–389 (YRGMG). R401 functions as the Proton acceptor in the catalytic mechanism. IMP is bound at residue E415. Residues E469, S470, and H471 each coordinate K(+).

The protein belongs to the IMPDH/GMPR family. Homotetramer. The cofactor is K(+).

It carries out the reaction IMP + NAD(+) + H2O = XMP + NADH + H(+). It functions in the pathway purine metabolism; XMP biosynthesis via de novo pathway; XMP from IMP: step 1/1. Mycophenolic acid (MPA) is a non-competitive inhibitor that prevents formation of the closed enzyme conformation by binding to the same site as the amobile flap. In contrast, mizoribine monophosphate (MZP) is a competitive inhibitor that induces the closed conformation. MPA is a potent inhibitor of mammalian IMPDHs but a poor inhibitor of the bacterial enzymes. MZP is a more potent inhibitor of bacterial IMPDH. Functionally, catalyzes the conversion of inosine 5'-phosphate (IMP) to xanthosine 5'-phosphate (XMP), the first committed and rate-limiting step in the de novo synthesis of guanine nucleotides, and therefore plays an important role in the regulation of cell growth. The polypeptide is Inosine-5'-monophosphate dehydrogenase (Yersinia pestis).